The following is a 470-amino-acid chain: Sulfate adenylyltransferase subunit 1 (470 aa).

The region spanning 22-238 is the tr-type G domain; sequence KELLRFITCG…ETIKIDYAYT (217 aa). A G1 region spans residues 31–38; sequence GSVDDGKS. 31–38 is a GTP binding site; it reads GSVDDGKS. The interval 89-93 is G2; the sequence is GITID. Residues 110 to 113 are G3; it reads DTPG. GTP-binding positions include 110–114 and 165–168; these read DTPGH and NKMD. The segment at 165–168 is G4; that stretch reads NKMD. Positions 202 to 204 are G5; that stretch reads SAL.

It belongs to the TRAFAC class translation factor GTPase superfamily. Classic translation factor GTPase family. CysN/NodQ subfamily. In terms of assembly, heterodimer composed of CysD, the smaller subunit, and CysN.

The catalysed reaction is sulfate + ATP + H(+) = adenosine 5'-phosphosulfate + diphosphate. It functions in the pathway sulfur metabolism; hydrogen sulfide biosynthesis; sulfite from sulfate: step 1/3. Its function is as follows. With CysD forms the ATP sulfurylase (ATPS) that catalyzes the adenylation of sulfate producing adenosine 5'-phosphosulfate (APS) and diphosphate, the first enzymatic step in sulfur assimilation pathway. APS synthesis involves the formation of a high-energy phosphoric-sulfuric acid anhydride bond driven by GTP hydrolysis by CysN coupled to ATP hydrolysis by CysD. The protein is Sulfate adenylyltransferase subunit 1 of Francisella tularensis subsp. tularensis (strain SCHU S4 / Schu 4).